We begin with the raw amino-acid sequence, 64 residues long: Large ribosomal subunit protein bL28 (64 aa).

It belongs to the bacterial ribosomal protein bL28 family.

The chain is Large ribosomal subunit protein bL28 from Trichlorobacter lovleyi (strain ATCC BAA-1151 / DSM 17278 / SZ) (Geobacter lovleyi).